We begin with the raw amino-acid sequence, 328 residues long: GTP 3',8-cyclase (328 aa).

In terms of domain architecture, Radical SAM core spans 1–229; sequence MNQVDYLRIS…ESQVRGAGPA (229 aa). Arginine 8 provides a ligand contact to GTP. The [4Fe-4S] cluster site is built by cysteine 15 and cysteine 19. Tyrosine 21 is an S-adenosyl-L-methionine binding site. Cysteine 22 is a binding site for [4Fe-4S] cluster. Arginine 60 serves as a coordination point for GTP. Glycine 64 is a binding site for S-adenosyl-L-methionine. Threonine 91 lines the GTP pocket. Residue serine 115 coordinates S-adenosyl-L-methionine. Residue lysine 155 coordinates GTP. Residue methionine 189 participates in S-adenosyl-L-methionine binding. 2 residues coordinate [4Fe-4S] cluster: cysteine 252 and cysteine 255. 257-259 is a GTP binding site; the sequence is RMR. Cysteine 269 lines the [4Fe-4S] cluster pocket.

The protein belongs to the radical SAM superfamily. MoaA family. In terms of assembly, monomer and homodimer. [4Fe-4S] cluster serves as cofactor.

The catalysed reaction is GTP + AH2 + S-adenosyl-L-methionine = (8S)-3',8-cyclo-7,8-dihydroguanosine 5'-triphosphate + 5'-deoxyadenosine + L-methionine + A + H(+). The protein operates within cofactor biosynthesis; molybdopterin biosynthesis. Its function is as follows. Catalyzes the cyclization of GTP to (8S)-3',8-cyclo-7,8-dihydroguanosine 5'-triphosphate. The chain is GTP 3',8-cyclase from Nostoc punctiforme (strain ATCC 29133 / PCC 73102).